The following is a 182-amino-acid chain: Large ribosomal subunit protein uL10 (182 aa).

The protein belongs to the universal ribosomal protein uL10 family. As to quaternary structure, part of the ribosomal stalk of the 50S ribosomal subunit. The N-terminus interacts with L11 and the large rRNA to form the base of the stalk. The C-terminus forms an elongated spine to which L12 dimers bind in a sequential fashion forming a multimeric L10(L12)X complex.

Its function is as follows. Forms part of the ribosomal stalk, playing a central role in the interaction of the ribosome with GTP-bound translation factors. This Herminiimonas arsenicoxydans protein is Large ribosomal subunit protein uL10.